A 123-amino-acid polypeptide reads, in one-letter code: Large ribosomal subunit protein uL14c (123 aa).

The protein belongs to the universal ribosomal protein uL14 family. Part of the 50S ribosomal subunit.

Its subcellular location is the plastid. The protein resides in the chloroplast. Binds to 23S rRNA. The sequence is that of Large ribosomal subunit protein uL14c from Brachypodium distachyon (Purple false brome).